The following is a 142-amino-acid chain: Large ribosomal subunit protein uL13 (142 aa).

The protein belongs to the universal ribosomal protein uL13 family. In terms of assembly, part of the 50S ribosomal subunit.

In terms of biological role, this protein is one of the early assembly proteins of the 50S ribosomal subunit, although it is not seen to bind rRNA by itself. It is important during the early stages of 50S assembly. The protein is Large ribosomal subunit protein uL13 of Buchnera aphidicola subsp. Acyrthosiphon pisum (strain 5A).